The chain runs to 246 residues: Phosducin (246 aa).

Residues 1-14 (MEEAASQSLEEDFE) show a composition bias toward acidic residues. Positions 1 to 70 (MEEAASQSLE…DKDSKERMSR (70 aa)) are disordered. Residues 1–246 (MEEAASQSLE…QTNTEDEDIE (246 aa)) form the Phosducin domain. A compositionally biased stretch (basic and acidic residues) spans 58–69 (SRDDKDSKERMS). Ser-73 is modified (phosphoserine; by PKA). Residues 111–246 (YGFVYELETG…QTNTEDEDIE (136 aa)) form a thioredoxin fold region.

This sequence belongs to the phosducin family. Interacts with CRX. Forms a complex with the beta and gamma subunits of the GTP-binding protein, transducin. Light-induced changes in cyclic nucleotide levels modulate the phosphorylation of this protein by cAMP kinase.

The protein localises to the cytoplasm. It localises to the cytosol. Its subcellular location is the nucleus. It is found in the cell projection. The protein resides in the cilium. The protein localises to the photoreceptor outer segment. It localises to the photoreceptor inner segment. Its function is as follows. Inhibits the transcriptional activation activity of the cone-rod homeobox CRX. May participate in the regulation of visual phototransduction or in the integration of photoreceptor metabolism. This Rattus norvegicus (Rat) protein is Phosducin (Pdc).